The primary structure comprises 558 residues: D-xylose-proton symporter-like 3, chloroplastic (558 aa).

A chloroplast-targeting transit peptide spans 1 to 31 (MAFAVSVQSHFAIRALKRDHFKNPSPRTFCS). The next 12 helical transmembrane spans lie at 98–118 (VILP…DIGA), 146–166 (LVVS…YGVA), 175–195 (LIIA…APDL), 197–217 (ILLV…HGAP), 238–258 (LFIV…IDVV), 264–284 (MYGF…SLPA), 359–379 (ALTI…PSVL), 400–420 (VSVI…AKVD), 426–446 (PLLI…SAYY), 449–469 (LGGF…CYQI), 491–511 (GISL…FAFS), and 522–542 (LFLL…LVVP).

It belongs to the major facilitator superfamily. Sugar transporter (TC 2.A.1.1) family.

The protein resides in the plastid. It is found in the chloroplast membrane. This Arabidopsis thaliana (Mouse-ear cress) protein is D-xylose-proton symporter-like 3, chloroplastic.